The following is a 286-amino-acid chain: Putative 2-aminoethylphosphonate transport system permease protein PhnU (286 aa).

6 consecutive transmembrane segments (helical) span residues 19-39, 76-96, 111-131, 150-170, 202-222, and 254-274; these read WLLLPLLVLATLFFWPLSLIV, FFATAGCLLLGSVMSLILVFI, FIALPTFLITLAFTFIYGSAG, FLYSMQGVILAEITVFTPLVM, VIFPAALPALMAGGSLCLLLT, and YTVACMIALINIVLSLGLFSL. An ABC transmembrane type-1 domain is found at 68 to 275; sequence LLNTLQIAFF…VLSLGLFSLY (208 aa).

It belongs to the binding-protein-dependent transport system permease family.

The protein localises to the cell inner membrane. Probably part of the PhnSTUV complex (TC 3.A.1.11.5) involved in 2-aminoethylphosphonate import. Probably responsible for the translocation of the substrate across the membrane. The polypeptide is Putative 2-aminoethylphosphonate transport system permease protein PhnU (phnU) (Salmonella typhimurium (strain LT2 / SGSC1412 / ATCC 700720)).